A 1323-amino-acid polypeptide reads, in one-letter code: ABC transporter gloK (1323 aa).

Transmembrane regions (helical) follow at residues 6 to 26, 102 to 122, 138 to 158, 217 to 237, 240 to 260, 325 to 345, and 359 to 379; these read AIAS…TLEA, PHAL…AGIL, VAYG…VMST, IWAS…RLGV, VAAV…VFGF, LLVG…VFAF, and PLLA…GQAV. The 239-residue stretch at 142 to 380 folds into the ABC transmembrane type-1 1 domain; sequence LIAAYAIVYI…IFSLLGQAVS (239 aa). Residues 471–697 form the ABC transporter 1 domain; sequence IRDCSACWSK…SSYLESLGTR (227 aa). Position 503 to 510 (503 to 510) interacts with ATP; that stretch reads GPIGSGKS. The next 7 helical transmembrane spans lie at 748–768, 795–815, 821–841, 859–879, 891–910, 976–996, and 1006–1026; these read GWVT…GLVF, YALW…WLMI, AAIQ…LVYF, LIDM…LSCI, YVAA…QLFY, LNLT…SIAL, and IGVA…LVYT. In terms of domain architecture, ABC transmembrane type-1 2 spans 752 to 1031; sequence WWVFVLLCSG…TLVYTWTSLE (280 aa). The region spanning 1069-1300 is the ABC transporter 2 domain; it reads IRFQSVSAAY…PSFFASLLKA (232 aa). Residue 1103 to 1110 coordinates ATP; that stretch reads GRTGSGKS.

It belongs to the ABC transporter superfamily. ABCC family. Conjugate transporter (TC 3.A.1.208) subfamily.

It is found in the cell membrane. 3-isopropylmalate dehydratase large subunit; part of the gene cluster that mediates the biosynthesis of pneumocandins, lipohexapeptides of the echinocandin family that prevent fungal cell wall formation by non-competitive inhibition of beta-1,3-glucan synthase. Possibly secretes antifungal pneumocandins, thus avoiding of intracellular accumulation and ameliorating the toxicity to the producing cells. In Glarea lozoyensis (strain ATCC 20868 / MF5171), this protein is ABC transporter gloK.